Consider the following 92-residue polypeptide: Small ribosomal subunit protein uS19c (92 aa).

Belongs to the universal ribosomal protein uS19 family.

The protein resides in the plastid. The protein localises to the chloroplast. In terms of biological role, protein S19 forms a complex with S13 that binds strongly to the 16S ribosomal RNA. The chain is Small ribosomal subunit protein uS19c from Lemna minor (Common duckweed).